A 2346-amino-acid polypeptide reads, in one-letter code: Acetyl-CoA carboxylase 1 (2346 aa).

M1 carries the N-acetylmethionine modification. Phosphoserine is present on residues S5, S23, S25, S29, S34, S48, S50, and S53. T58 bears the Phosphothreonine mark. S78 and S80 each carry phosphoserine. The 502-residue stretch at 117–618 folds into the Biotin carboxylation domain; that stretch reads VIEKVLIANN…DTGWLDRLIA (502 aa). Residues 275–466 enclose the ATP-grasp domain; it reads SKRILNVPQE…LPAAQLQIAM (192 aa). An ATP-binding site is contributed by 315–320; sequence GGGGKG. E424, E437, and N439 together coordinate Mg(2+). Mn(2+) contacts are provided by E424, E437, and N439. The active site involves R441. S488 carries the post-translational modification Phosphoserine. T610 bears the Phosphothreonine mark. The region spanning 745-819 is the Biotinyl-binding domain; it reads FEKENDPSVM…DPGCVLAKMQ (75 aa). The residue at position 786 (K786) is an N6-biotinyllysine. S835, S1201, S1216, and S1218 each carry phosphoserine. The residue at position 1227 (T1227) is a Phosphothreonine. Phosphoserine occurs at positions 1259, 1263, and 1273. Position 1334 is an N6-acetyllysine (K1334). The 339-residue stretch at 1576–1914 folds into the CoA carboxyltransferase N-terminal domain; the sequence is PYVTKDLLQS…SVHSSVPLLN (339 aa). The segment at 1576–2234 is carboxyltransferase; that stretch reads PYVTKDLLQS…EDLVKKKIHN (659 aa). Residues R1823, K2127, and R2129 each contribute to the CoA site. The region spanning 1918–2234 is the CoA carboxyltransferase C-terminal domain; it reads PIDRIIEFVP…EDLVKKKIHN (317 aa). Phosphothreonine is present on T2153.

As to quaternary structure, monomer, homodimer, and homotetramer. Can form filamentous polymers. Interacts in its inactive phosphorylated form with the BRCT domains of BRCA1 which prevents ACACA dephosphorylation and inhibits lipid synthesis. Interacts with MID1IP1; interaction with MID1IP1 promotes oligomerization and increases its activity. Mg(2+) serves as cofactor. Mn(2+) is required as a cofactor. It depends on biotin as a cofactor. Post-translationally, phosphorylation on Ser-1263 is required for interaction with BRCA1. Phosphorylation at Ser-80 by AMPK inactivates enzyme activity. In terms of processing, the biotin cofactor is covalently attached to the central biotinyl-binding domain and is required for the catalytic activity. Expressed in brain, placenta, skeletal muscle, renal, pancreatic and adipose tissues; expressed at low level in pulmonary tissue; not detected in the liver.

It is found in the cytoplasm. Its subcellular location is the cytosol. It catalyses the reaction hydrogencarbonate + acetyl-CoA + ATP = malonyl-CoA + ADP + phosphate + H(+). The protein operates within lipid metabolism; malonyl-CoA biosynthesis; malonyl-CoA from acetyl-CoA: step 1/1. With respect to regulation, inhibited by phosphorylation. Citrate promotes oligomerization of the protein into filaments that correspond to the most active form of the carboxylase. Inhibited by palmitoyl-CoA. In terms of biological role, cytosolic enzyme that catalyzes the carboxylation of acetyl-CoA to malonyl-CoA, the first and rate-limiting step of de novo fatty acid biosynthesis. This is a 2 steps reaction starting with the ATP-dependent carboxylation of the biotin carried by the biotin carboxyl carrier (BCC) domain followed by the transfer of the carboxyl group from carboxylated biotin to acetyl-CoA. This is Acetyl-CoA carboxylase 1 from Homo sapiens (Human).